A 794-amino-acid polypeptide reads, in one-letter code: LPS-assembly protein LptD (794 aa).

Residues 1–31 (MPSHCSSLLCARFRLSSLAVIVALAASGVRA) form the signal peptide.

This sequence belongs to the LptD family. In terms of assembly, component of the lipopolysaccharide transport and assembly complex. Interacts with LptE and LptA.

It is found in the cell outer membrane. In terms of biological role, together with LptE, is involved in the assembly of lipopolysaccharide (LPS) at the surface of the outer membrane. The chain is LPS-assembly protein LptD from Marinobacter nauticus (strain ATCC 700491 / DSM 11845 / VT8) (Marinobacter aquaeolei).